Reading from the N-terminus, the 271-residue chain is 4,5-DOPA dioxygenase extradiol (271 aa).

Residues His-22, His-57, His-177, and His-234 each coordinate Zn(2+).

It belongs to the DODA-type extradiol aromatic ring-opening dioxygenase family. In terms of assembly, monomer. Zn(2+) is required as a cofactor.

The protein localises to the cytoplasm. It carries out the reaction L-dopa + O2 = 4-(L-alanin-3-yl)-2-hydroxy-cis,cis-muconate 6-semialdehyde + H(+). Functionally, in vitro, opens the cyclic ring of dihydroxy-phenylalanine (DOPA) between carbons 4 and 5, thus producing an unstable seco-DOPA that rearranges nonenzymatically to betalamic acid. The physiological substrate is unknown. This is 4,5-DOPA dioxygenase extradiol (ygiD) from Escherichia coli (strain K12).